We begin with the raw amino-acid sequence, 180 residues long: NAD(P)H-quinone oxidoreductase subunit J (180 aa).

The segment covering 1–16 has biased composition (polar residues); it reads MNEETQTSELTNTDQG. Positions 1 to 23 are disordered; it reads MNEETQTSELTNTDQGPQIEPGP.

It belongs to the complex I 30 kDa subunit family. As to quaternary structure, NDH-1 can be composed of about 15 different subunits; different subcomplexes with different compositions have been identified which probably have different functions.

It localises to the cellular thylakoid membrane. The catalysed reaction is a plastoquinone + NADH + (n+1) H(+)(in) = a plastoquinol + NAD(+) + n H(+)(out). It carries out the reaction a plastoquinone + NADPH + (n+1) H(+)(in) = a plastoquinol + NADP(+) + n H(+)(out). NDH-1 shuttles electrons from an unknown electron donor, via FMN and iron-sulfur (Fe-S) centers, to quinones in the respiratory and/or the photosynthetic chain. The immediate electron acceptor for the enzyme in this species is believed to be plastoquinone. Couples the redox reaction to proton translocation, and thus conserves the redox energy in a proton gradient. Cyanobacterial NDH-1 also plays a role in inorganic carbon-concentration. The polypeptide is NAD(P)H-quinone oxidoreductase subunit J (Prochlorococcus marinus (strain MIT 9211)).